The primary structure comprises 385 residues: DNA replication and repair protein RecF (385 aa).

30-37 (GANAAGKT) contacts ATP.

It belongs to the RecF family.

Its subcellular location is the cytoplasm. The RecF protein is involved in DNA metabolism; it is required for DNA replication and normal SOS inducibility. RecF binds preferentially to single-stranded, linear DNA. It also seems to bind ATP. The protein is DNA replication and repair protein RecF of Herpetosiphon aurantiacus (strain ATCC 23779 / DSM 785 / 114-95).